Consider the following 202-residue polypeptide: UPF0056 membrane protein CPn_1010/CP_0843/CPj1010/CpB1048 (202 aa).

Helical transmembrane passes span 7 to 27, 39 to 59, 61 to 81, 105 to 125, 137 to 157, and 175 to 195; these read LSLL…FVAL, VILR…TFGR, FFQF…FLLF, PIFF…TALL, IIFT…LCSS, and FGIA…SIAF.

This sequence belongs to the UPF0056 (MarC) family.

It is found in the cell membrane. The polypeptide is UPF0056 membrane protein CPn_1010/CP_0843/CPj1010/CpB1048 (Chlamydia pneumoniae (Chlamydophila pneumoniae)).